Here is a 609-residue protein sequence, read N- to C-terminus: Proline--tRNA ligase (609 aa).

This sequence belongs to the class-II aminoacyl-tRNA synthetase family. ProS type 1 subfamily. As to quaternary structure, homodimer.

The protein localises to the cytoplasm. The enzyme catalyses tRNA(Pro) + L-proline + ATP = L-prolyl-tRNA(Pro) + AMP + diphosphate. In terms of biological role, catalyzes the attachment of proline to tRNA(Pro) in a two-step reaction: proline is first activated by ATP to form Pro-AMP and then transferred to the acceptor end of tRNA(Pro). As ProRS can inadvertently accommodate and process non-cognate amino acids such as alanine and cysteine, to avoid such errors it has two additional distinct editing activities against alanine. One activity is designated as 'pretransfer' editing and involves the tRNA(Pro)-independent hydrolysis of activated Ala-AMP. The other activity is designated 'posttransfer' editing and involves deacylation of mischarged Ala-tRNA(Pro). The misacylated Cys-tRNA(Pro) is not edited by ProRS. The polypeptide is Proline--tRNA ligase (Synechococcus sp. (strain JA-3-3Ab) (Cyanobacteria bacterium Yellowstone A-Prime)).